The chain runs to 196 residues: Alpha-crystallin A chain (196 aa).

The residue at position 1 (Met1) is an N-acetylmethionine. The segment at 1–63 (MDVTIQHPWF…RTVLDSGISE (63 aa)) is required for complex formation with BFSP1 and BFSP2. Residue Gln6 is modified to Deamidated glutamine; partial. Ser45 bears the Phosphoserine mark. Gln50 carries the post-translational modification Deamidated glutamine; partial. The region spanning 76-185 (HAGNPKNNPI…GHSERAIPVS (110 aa)) is the sHSP domain. 2 positions are modified to N6-acetyllysine: Lys93 and Lys122. His123 provides a ligand contact to Zn(2+). The residue at position 124 (Asn124) is a Deamidated asparagine; partial. Glu125 and His130 together coordinate Zn(2+). Phosphoserine is present on Ser145. A Deamidated asparagine; partial modification is found at Asn146. Residues 168 to 196 (KVQSGLDAGHSERAIPVSREEKPSSAPSS) form a disordered region. Gln170 carries the post-translational modification Deamidated glutamine; partial. Over residues 176 to 190 (GHSERAIPVSREEKP) the composition is skewed to basic and acidic residues. Position 177 (His177) interacts with Zn(2+). O-linked (GlcNAc) serine glycosylation is present at Ser185.

This sequence belongs to the small heat shock protein (HSP20) family. In terms of assembly, heteromer composed of three CRYAA and one CRYAB subunits. Inter-subunit bridging via zinc ions enhances stability, which is crucial as there is no protein turn over in the lens. Can also form homodimers and homotetramers (dimers of dimers) which serve as the building blocks of homooligomers. Within homooligomers, the zinc-binding motif is created from residues of 3 different molecules. His-123 and Glu-125 from one molecule are ligands of the zinc ion, and His-130 and His-177 residues from additional molecules complete the site with tetrahedral coordination geometry. Part of a complex required for lens intermediate filament formation composed of BFSP1, BFSP2 and CRYAA. Acetylation at Lys-93 may increase chaperone activity. In terms of processing, undergoes age-dependent proteolytical cleavage at the C-terminus.

Its subcellular location is the cytoplasm. It is found in the nucleus. In terms of biological role, contributes to the transparency and refractive index of the lens. Acts as a chaperone, preventing aggregation of various proteins under a wide range of stress conditions. Required for the correct formation of lens intermediate filaments as part of a complex composed of BFSP1, BFSP2 and CRYAA. The chain is Alpha-crystallin A chain (CRYAA) from Mesocricetus auratus (Golden hamster).